The chain runs to 281 residues: Elongation factor 1-delta (281 aa).

A2 carries the N-acetylalanine modification. Position 17 is an N6-acetyllysine (K17). Residues S37, S44, S60, S86, and S106 each carry the phosphoserine modification. Residues 80 to 115 are leucine-zipper; it reads LIVRIASLEVENQNLRGVVQDLQQAISKLEVRLSTL. The residue at position 107 (K107) is an N6-acetyllysine. A compositionally biased stretch (polar residues) spans 115 to 132; the sequence is LEKSSPTHRATAPQTQHV. The disordered stretch occupies residues 115–172; it reads LEKSSPTHRATAPQTQHVSPMRQVEPPAKKGATPAEDDEDNDIDLFGSDEEEEDKEAA. K117 is subject to N6-acetyllysine; alternate. K117 is modified (N6-succinyllysine; alternate). At S119 the chain carries Phosphoserine. T129 carries the post-translational modification Phosphothreonine. S133 carries the phosphoserine modification. A Phosphothreonine modification is found at T147. A compositionally biased stretch (acidic residues) spans 149 to 169; it reads AEDDEDNDIDLFGSDEEEEDK. The residue at position 162 (S162) is a Phosphoserine; by CK2. The catalytic (GEF) stretch occupies residues 173–281; that stretch reads RLREERLRQY…SVDIAAFNKI (109 aa).

The protein belongs to the EF-1-beta/EF-1-delta family. As to quaternary structure, EF-1 is composed of 4 subunits: alpha, beta, delta isoform 1, and gamma. Isoform 2 interacts with HSF1 and NFE2L2.

It is found in the nucleus. EF-1-beta and EF-1-delta stimulate the exchange of GDP bound to EF-1-alpha to GTP, regenerating EF-1-alpha for another round of transfer of aminoacyl-tRNAs to the ribosome. Functionally, regulates induction of heat-shock-responsive genes through association with heat shock transcription factors and direct DNA-binding at heat shock promoter elements (HSE). This chain is Elongation factor 1-delta (Eef1d), found in Rattus norvegicus (Rat).